A 226-amino-acid polypeptide reads, in one-letter code: Ribonuclease 3 (226 aa).

An RNase III domain is found at 5–127 (LERLQRALGY…IIGAIYLDAG (123 aa)). Glutamate 40 lines the Mg(2+) pocket. Aspartate 44 is a catalytic residue. The Mg(2+) site is built by aspartate 113 and glutamate 116. Glutamate 116 is a catalytic residue. The region spanning 154–224 (DSKTRLQEYL…AKQALLALGV (71 aa)) is the DRBM domain.

It belongs to the ribonuclease III family. As to quaternary structure, homodimer. Mg(2+) serves as cofactor.

The protein localises to the cytoplasm. The enzyme catalyses Endonucleolytic cleavage to 5'-phosphomonoester.. Digests double-stranded RNA. Involved in the processing of primary rRNA transcript to yield the immediate precursors to the large and small rRNAs (23S and 16S). Processes some mRNAs, and tRNAs when they are encoded in the rRNA operon. Processes pre-crRNA and tracrRNA of type II CRISPR loci if present in the organism. The sequence is that of Ribonuclease 3 from Hahella chejuensis (strain KCTC 2396).